The primary structure comprises 324 residues: Elongation factor P--(R)-beta-lysine ligase (324 aa).

75–77 is a binding site for substrate; the sequence is SPE. ATP-binding positions include 99-101 and N108; that span reads RNE. Y117 is a substrate binding site. 243–244 provides a ligand contact to ATP; it reads EL. Residue E250 participates in substrate binding. G299 serves as a coordination point for ATP.

This sequence belongs to the class-II aminoacyl-tRNA synthetase family. EpmA subfamily. As to quaternary structure, homodimer.

The enzyme catalyses D-beta-lysine + L-lysyl-[protein] + ATP = N(6)-((3R)-3,6-diaminohexanoyl)-L-lysyl-[protein] + AMP + diphosphate + H(+). In terms of biological role, with EpmB is involved in the beta-lysylation step of the post-translational modification of translation elongation factor P (EF-P). Catalyzes the ATP-dependent activation of (R)-beta-lysine produced by EpmB, forming a lysyl-adenylate, from which the beta-lysyl moiety is then transferred to the epsilon-amino group of a conserved specific lysine residue in EF-P. This Vibrio cholerae serotype O1 (strain ATCC 39315 / El Tor Inaba N16961) protein is Elongation factor P--(R)-beta-lysine ligase.